A 59-amino-acid chain; its full sequence is Aedesin (59 aa).

The signal sequence occupies residues 1-23; sequence MNFTKLFAIVLLAALVLLGQTEA.

It belongs to the cecropin family. In terms of tissue distribution, salivary gland (at protein level).

The protein resides in the secreted. Antimicrobial peptide. Exhibits antibacterial activity against Gram-negative bacteria, such as Escherichia coli, Pseudomonas aeruginosa, Acinetobacter baumannii and Klebsiella pneumoniae. Shows no antibacterial effects against Gram-positive bacteria, such as Staphylococcus aureus, Enterococcus faecalis and Enterococcus faecium. Exhibits antiviral activity against all four dengue virus serotypes and chikungunya virus. Exhibits leishmanicidal activity. Partially neutralizes lipopolysaccharides (LPS). Exhibits anti-inflammatory properties: inhibits LPS-induced iNOS/NOS2 transcription, nitric oxide (NO) and pro-inflammatory cytokine production in mouse macrophages and human peripheral blood mononuclear cells (PBMCs); inhibits LPS-induced activation of MAPK and NF-kappa-B signaling pathways in mouse macrophages. The sequence is that of Aedesin from Aedes aegypti (Yellowfever mosquito).